A 475-amino-acid polypeptide reads, in one-letter code: Aspartyl/glutamyl-tRNA(Asn/Gln) amidotransferase subunit B (475 aa).

Belongs to the GatB/GatE family. GatB subfamily. Heterotrimer of A, B and C subunits.

The enzyme catalyses L-glutamyl-tRNA(Gln) + L-glutamine + ATP + H2O = L-glutaminyl-tRNA(Gln) + L-glutamate + ADP + phosphate + H(+). The catalysed reaction is L-aspartyl-tRNA(Asn) + L-glutamine + ATP + H2O = L-asparaginyl-tRNA(Asn) + L-glutamate + ADP + phosphate + 2 H(+). In terms of biological role, allows the formation of correctly charged Asn-tRNA(Asn) or Gln-tRNA(Gln) through the transamidation of misacylated Asp-tRNA(Asn) or Glu-tRNA(Gln) in organisms which lack either or both of asparaginyl-tRNA or glutaminyl-tRNA synthetases. The reaction takes place in the presence of glutamine and ATP through an activated phospho-Asp-tRNA(Asn) or phospho-Glu-tRNA(Gln). The protein is Aspartyl/glutamyl-tRNA(Asn/Gln) amidotransferase subunit B of Bacillus cereus (strain B4264).